We begin with the raw amino-acid sequence, 153 residues long: Alpha-amylase type B isozyme (153 aa).

Substrate-binding positions include Lys-19, 25 to 27 (GWW), His-38, Gln-44, Lys-123, and Trp-150.

The protein belongs to the glycosyl hydrolase 13 family. Monomer. Ca(2+) serves as cofactor.

The catalysed reaction is Endohydrolysis of (1-&gt;4)-alpha-D-glucosidic linkages in polysaccharides containing three or more (1-&gt;4)-alpha-linked D-glucose units.. This Hordeum vulgare (Barley) protein is Alpha-amylase type B isozyme (AMY1.4).